We begin with the raw amino-acid sequence, 423 residues long: G2/mitotic-specific cyclin-B1 (423 aa).

A Phosphoserine; by CDK1 modification is found at S116. S118 is subject to Phosphoserine. S123 carries the post-translational modification Phosphoserine; by PLK1. S137 is subject to Phosphoserine. 2 interaction with CDK2 regions span residues 159–167 (EYVKDIYAY) and 248–251 (YEEM). T311 carries the post-translational modification Phosphothreonine.

The protein belongs to the cyclin family. Cyclin AB subfamily. In terms of assembly, interacts with the CDC2 protein kinase to form a serine/threonine kinase holoenzyme complex also known as maturation promoting factor (MPF). The cyclin subunit imparts substrate specificity to the complex. Binds HEI10. Interacts with catalytically active RALBP1 and CDC2 during mitosis to form an endocytotic complex during interphase. Interacts with CCNF; interaction is required for nuclear localization. Interacts with CDK5RAP3. Interacts with RFPL4A and UBE2A. Interacts with INCA1. Ubiquitinated by the SCF(NIPA) complex during interphase, leading to its destruction. Deubiquitinated by USP22 during G2/M phase. In terms of processing, phosphorylated by PLK1 at Ser-123 on centrosomes during prophase: phosphorylation by PLK1 does not cause nuclear import. Phosphorylation at Ser-137 was also reported to be mediated by PLK1 but Ser-123 seems to be the primary phosphorylation site.

It localises to the cytoplasm. The protein resides in the nucleus. It is found in the cytoskeleton. The protein localises to the microtubule organizing center. Its subcellular location is the centrosome. In terms of biological role, essential for the control of the cell cycle at the G2/M (mitosis) transition. This Rattus norvegicus (Rat) protein is G2/mitotic-specific cyclin-B1 (Ccnb1).